The chain runs to 717 residues: DNA ligase (717 aa).

Residues 41–45 (DARYD), 90–91 (SL), and glutamate 124 contribute to the NAD(+) site. The active-site N6-AMP-lysine intermediate is the lysine 126. Arginine 147, glutamate 183, lysine 299, and lysine 323 together coordinate NAD(+). Positions 428, 431, 446, and 452 each coordinate Zn(2+). The 82-residue stretch at 636–717 (ADYSPVAGKT…WLQLINEHHI (82 aa)) folds into the BRCT domain.

Belongs to the NAD-dependent DNA ligase family. LigA subfamily. The cofactor is Mg(2+). Requires Mn(2+) as cofactor.

It catalyses the reaction NAD(+) + (deoxyribonucleotide)n-3'-hydroxyl + 5'-phospho-(deoxyribonucleotide)m = (deoxyribonucleotide)n+m + AMP + beta-nicotinamide D-nucleotide.. In terms of biological role, DNA ligase that catalyzes the formation of phosphodiester linkages between 5'-phosphoryl and 3'-hydroxyl groups in double-stranded DNA using NAD as a coenzyme and as the energy source for the reaction. It is essential for DNA replication and repair of damaged DNA. This chain is DNA ligase, found in Bartonella bacilliformis (strain ATCC 35685 / KC583 / Herrer 020/F12,63).